The sequence spans 455 residues: Bifunctional protein GlmU (455 aa).

Residues 1–227 are pyrophosphorylase; sequence MGLSVIILAA…CEEVQGVNDR (227 aa). UDP-N-acetyl-alpha-D-glucosamine contacts are provided by residues 8-11, Lys22, Gln73, 78-79, 100-102, Gly137, Glu152, Asn167, and Asn225; these read LAAG, GT, and YGD. Asp102 provides a ligand contact to Mg(2+). Asn225 serves as a coordination point for Mg(2+). The linker stretch occupies residues 228-248; that stretch reads WELTKLERYYQRLMAKKLSLA. The segment at 249 to 455 is N-acetyltransferase; it reads GVTIIDPERF…KGWHRPTKKE (207 aa). Arg332 and Lys350 together coordinate UDP-N-acetyl-alpha-D-glucosamine. Catalysis depends on His362, which acts as the Proton acceptor. UDP-N-acetyl-alpha-D-glucosamine-binding residues include Tyr365 and Asn376. Acetyl-CoA contacts are provided by residues Ala379, 385-386, Ser404, Ala422, and Arg439; that span reads NY.

The protein in the N-terminal section; belongs to the N-acetylglucosamine-1-phosphate uridyltransferase family. In the C-terminal section; belongs to the transferase hexapeptide repeat family. In terms of assembly, homotrimer. It depends on Mg(2+) as a cofactor.

Its subcellular location is the cytoplasm. It carries out the reaction alpha-D-glucosamine 1-phosphate + acetyl-CoA = N-acetyl-alpha-D-glucosamine 1-phosphate + CoA + H(+). The enzyme catalyses N-acetyl-alpha-D-glucosamine 1-phosphate + UTP + H(+) = UDP-N-acetyl-alpha-D-glucosamine + diphosphate. It participates in nucleotide-sugar biosynthesis; UDP-N-acetyl-alpha-D-glucosamine biosynthesis; N-acetyl-alpha-D-glucosamine 1-phosphate from alpha-D-glucosamine 6-phosphate (route II): step 2/2. Its pathway is nucleotide-sugar biosynthesis; UDP-N-acetyl-alpha-D-glucosamine biosynthesis; UDP-N-acetyl-alpha-D-glucosamine from N-acetyl-alpha-D-glucosamine 1-phosphate: step 1/1. It functions in the pathway bacterial outer membrane biogenesis; LPS lipid A biosynthesis. Catalyzes the last two sequential reactions in the de novo biosynthetic pathway for UDP-N-acetylglucosamine (UDP-GlcNAc). The C-terminal domain catalyzes the transfer of acetyl group from acetyl coenzyme A to glucosamine-1-phosphate (GlcN-1-P) to produce N-acetylglucosamine-1-phosphate (GlcNAc-1-P), which is converted into UDP-GlcNAc by the transfer of uridine 5-monophosphate (from uridine 5-triphosphate), a reaction catalyzed by the N-terminal domain. The sequence is that of Bifunctional protein GlmU from Coxiella burnetii (strain Dugway 5J108-111).